Reading from the N-terminus, the 1243-residue chain is Multifunctional 2-oxoglutarate metabolism enzyme (1243 aa).

The 2-oxoglutarate dehydrogenase E1, N-terminal part stretch occupies residues 1–40; sequence MNSPSPFGQNEWLVEEMYRKFREDPSSVDPSWHEFLVDYS. The segment covering 22–36 has biased composition (basic and acidic residues); it reads REDPSSVDPSWHEFL. Residues 22–118 form a disordered region; that stretch reads REDPSSVDPS…AAPAGVSDDD (97 aa). Residues 41-103 form a linker region; the sequence is PEPTNDAPAG…KKPEEKTSPA (63 aa). Residues 47 to 58 are compositionally biased toward low complexity; it reads APAGNGKPAAAP. Over residues 59-71 the composition is skewed to pro residues; the sequence is TAPPEPASAPAPK. Positions 91 to 100 are enriched in basic and acidic residues; sequence APEKKPEEKT. Low complexity predominate over residues 101–112; that stretch reads SPAPKAKTAAPA. The tract at residues 104–353 is succinyltransferase E2; sequence PKAKTAAPAG…LRTIHTLLLD (250 aa). Residue His-332 is the Proton acceptor; for succinyltransferase activity of the active site. The interval 354-1243 is 2-oxoglutarate dehydrogenase E1, C-terminal part; the sequence is DEFYDEIFRE…QQEIIDEAFG (890 aa). Residue Arg-558 coordinates thiamine diphosphate. 2 residues coordinate 2-oxoglutarate: His-597 and Ser-622. Thiamine diphosphate-binding residues include Ser-622, Leu-624, Asp-661, Ala-662, Ala-663, and Asn-694. Asp-661 contacts Mg(2+). The Mg(2+) site is built by Asn-694 and Ile-696. Residues 799–831 adopt a coiled-coil conformation; the sequence is DISMKEAEDALRDYQGQLERVFNEVRELEKHAI. 2-oxoglutarate is bound at residue His-1036. Residues Thr-1054, Arg-1070, Lys-1105, Ser-1108, Gln-1158, Arg-1165, and Arg-1166 each coordinate acetyl-CoA.

It belongs to the 2-oxoacid dehydrogenase family. Kgd subfamily. In terms of assembly, homodimer. The 2-oxoglutarate dehydrogenase (ODH) complex contains multiple copies of three enzymatic components: 2-oxoglutarate dehydrogenase (E1), dihydrolipoamide succinyltransferase (E2) and lipoamide dehydrogenase (E3). Mg(2+) serves as cofactor. Requires thiamine diphosphate as cofactor.

The enzyme catalyses glyoxylate + 2-oxoglutarate + H(+) = 2-hydroxy-3-oxoadipate + CO2. It catalyses the reaction 2-oxoglutarate + H(+) = succinate semialdehyde + CO2. The catalysed reaction is N(6)-[(R)-lipoyl]-L-lysyl-[protein] + 2-oxoglutarate + H(+) = N(6)-[(R)-S(8)-succinyldihydrolipoyl]-L-lysyl-[protein] + CO2. It carries out the reaction N(6)-[(R)-dihydrolipoyl]-L-lysyl-[protein] + succinyl-CoA = N(6)-[(R)-S(8)-succinyldihydrolipoyl]-L-lysyl-[protein] + CoA. Its pathway is carbohydrate metabolism; tricarboxylic acid cycle; succinate from 2-oxoglutarate (transferase route): step 1/2. It participates in carbohydrate metabolism; tricarboxylic acid cycle; succinyl-CoA from 2-oxoglutarate (dehydrogenase route): step 1/1. Its activity is regulated as follows. Alpha-ketoglutarate dehydrogenase and decarboxylase activities are inhibited by unphosphorylated GarA, and allosterically activated by acetyl-CoA, the main substrate of the TCA cycle. Functionally, shows three enzymatic activities that share a first common step, the attack of thiamine-PP on 2-oxoglutarate (alpha-ketoglutarate, KG), leading to the formation of an enamine-thiamine-PP intermediate upon decarboxylation. Thus, displays KGD activity, catalyzing the decarboxylation from five-carbon 2-oxoglutarate to four-carbon succinate semialdehyde (SSA). Also catalyzes C-C bond formation between the activated aldehyde formed after decarboxylation of alpha-ketoglutarate and the carbonyl of glyoxylate (GLX), to yield 2-hydroxy-3-oxoadipate (HOA), which spontaneously decarboxylates to form 5-hydroxylevulinate (HLA). And is also a component of the 2-oxoglutarate dehydrogenase (ODH) complex, that catalyzes the overall conversion of 2-oxoglutarate to succinyl-CoA and CO(2). The KG decarboxylase and KG dehydrogenase reactions provide two alternative, tightly regulated, pathways connecting the oxidative and reductive branches of the TCA cycle. The sequence is that of Multifunctional 2-oxoglutarate metabolism enzyme (kgd) from Mycolicibacterium vanbaalenii (strain DSM 7251 / JCM 13017 / BCRC 16820 / KCTC 9966 / NRRL B-24157 / PYR-1) (Mycobacterium vanbaalenii).